We begin with the raw amino-acid sequence, 468 residues long: Glutamate--tRNA ligase (468 aa).

Residues 8-18 carry the 'HIGH' region motif; it reads PSPTGDPHVGT. The 'KMSKS' region signature appears at 243–247; it reads KISKR. An ATP-binding site is contributed by K246.

The protein belongs to the class-I aminoacyl-tRNA synthetase family. Glutamate--tRNA ligase type 1 subfamily. As to quaternary structure, monomer.

It is found in the cytoplasm. The catalysed reaction is tRNA(Glu) + L-glutamate + ATP = L-glutamyl-tRNA(Glu) + AMP + diphosphate. Catalyzes the attachment of glutamate to tRNA(Glu) in a two-step reaction: glutamate is first activated by ATP to form Glu-AMP and then transferred to the acceptor end of tRNA(Glu). The chain is Glutamate--tRNA ligase from Thermus thermophilus (strain ATCC BAA-163 / DSM 7039 / HB27).